We begin with the raw amino-acid sequence, 516 residues long: Cilia- and flagella-associated protein 53 (516 aa).

Coiled-coil stretches lie at residues 217–283 (EEKK…LQVK) and 316–440 (MQGY…RQMK). 2 stretches are compositionally biased toward basic and acidic residues: residues 417–436 (KELL…DRNA) and 461–472 (QAEREEEQREFE). Disordered regions lie at residues 417–443 (KELL…KVAQ) and 455–475 (YQQS…EAGL).

It belongs to the CFAP53 family.

The protein resides in the cytoplasm. It localises to the cytoskeleton. It is found in the cilium axoneme. The protein localises to the microtubule organizing center. Its subcellular location is the centrosome. The protein resides in the centriolar satellite. Its function is as follows. Microtubule inner protein (MIP) part of the dynein-decorated doublet microtubules (DMTs) in cilia axoneme, which is required for motile cilia beating. Regulates motility patterns of both 9+0 and 9+2 motile cilia through differential localization and recruitment of axonemal dynein components. Required for motile cilium formation and movement. Involved in the establishment of left-right symmetry during embryogenesis. The chain is Cilia- and flagella-associated protein 53 from Xenopus laevis (African clawed frog).